Consider the following 98-residue polypeptide: MATKSVSTFAIFFILVLAIFETPEIEAYDRKCLKEYGGDVGFSYCAPRIFPTFCDQNCRKNKGAKGGVCRWEENNAIGVKCLCNFCSEEPSDQTLSRI.

A signal peptide spans 1–27; sequence MATKSVSTFAIFFILVLAIFETPEIEA. 4 disulfides stabilise this stretch: Cys-32–Cys-86, Cys-45–Cys-69, Cys-54–Cys-81, and Cys-58–Cys-83.

Belongs to the DEFL family. Protease inhibitor I18 (RTI/MTI-2) subfamily.

It is found in the secreted. The polypeptide is Defensin-like protein 192 (ATTI7) (Arabidopsis thaliana (Mouse-ear cress)).